The primary structure comprises 429 residues: Serine--tRNA ligase (429 aa).

235 to 237 is an L-serine binding site; that stretch reads TAE. ATP is bound at residue 266–268; sequence RSE. Glutamate 289 lines the L-serine pocket. 353 to 356 provides a ligand contact to ATP; the sequence is EISS. Serine 389 is a binding site for L-serine.

The protein belongs to the class-II aminoacyl-tRNA synthetase family. Type-1 seryl-tRNA synthetase subfamily. As to quaternary structure, homodimer. The tRNA molecule binds across the dimer.

The protein resides in the cytoplasm. It catalyses the reaction tRNA(Ser) + L-serine + ATP = L-seryl-tRNA(Ser) + AMP + diphosphate + H(+). The enzyme catalyses tRNA(Sec) + L-serine + ATP = L-seryl-tRNA(Sec) + AMP + diphosphate + H(+). It functions in the pathway aminoacyl-tRNA biosynthesis; selenocysteinyl-tRNA(Sec) biosynthesis; L-seryl-tRNA(Sec) from L-serine and tRNA(Sec): step 1/1. Functionally, catalyzes the attachment of serine to tRNA(Ser). Is also able to aminoacylate tRNA(Sec) with serine, to form the misacylated tRNA L-seryl-tRNA(Sec), which will be further converted into selenocysteinyl-tRNA(Sec). The polypeptide is Serine--tRNA ligase (Haemophilus influenzae (strain PittGG)).